Here is a 1969-residue protein sequence, read N- to C-terminus: Hybrid signal transduction histidine kinase B (1969 aa).

A compositionally biased stretch (polar residues) spans M1–F10. Disordered regions lie at residues M1 to K91, K218 to Q335, Q412 to K436, N468 to L505, and G551 to N598. Over residues E11 to N55 the composition is skewed to low complexity. Over residues S56–N65 the composition is skewed to basic and acidic residues. Positions S72–N86 are enriched in basic residues. A compositionally biased stretch (polar residues) spans T242–Q252. Over residues S280–S292 the composition is skewed to low complexity. The span at Q293 to R304 shows a compositional bias: polar residues. Residues S313–Q335 show a composition bias toward low complexity. Residues Q416–I425 show a composition bias toward basic residues. Polar residues predominate over residues N469 to P492. Positions G551 to G571 are enriched in gly residues. Residues S574 to N598 are compositionally biased toward low complexity. A run of 5 helical transmembrane segments spans residues A660–L680, E684–I704, M708–I728, L747–I767, and F795–L815. The Histidine kinase domain occupies T967 to I1188. Phosphohistidine; by autocatalysis is present on H970. Disordered regions lie at residues A1359–I1415, G1521–S1563, N1617–S1709, and Q1755–A1832. The span at G1373–L1398 shows a compositional bias: gly residues. 2 stretches are compositionally biased toward low complexity: residues D1399–S1410 and S1527–S1549. Composition is skewed to polar residues over residues E1554 to S1563 and K1626 to R1665. Composition is skewed to low complexity over residues Q1755–Q1774 and K1781–T1821. One can recognise a Response regulatory domain in the interval K1840 to H1967. At D1889 the chain carries 4-aspartylphosphate.

The protein resides in the membrane. The catalysed reaction is ATP + protein L-histidine = ADP + protein N-phospho-L-histidine.. Its function is as follows. Acts in the cytokinin signal transduction pathway that regulates spore germination. Required for the maintenance of spore dormancy. Does not appear to act as a cytokinin receptor. Probably undergoes ATP-dependent autophosphorylation at a conserved histidine residue in the kinase core, which is followed by transfer of the phosphoryl group to a conserved aspartate residue in the receiver domain. In Dictyostelium discoideum (Social amoeba), this protein is Hybrid signal transduction histidine kinase B (dhkB).